Here is a 617-residue protein sequence, read N- to C-terminus: Melatonin-related receptor (617 aa).

The Extracellular portion of the chain corresponds to 1–30 (MGPTLAVPTPYGCIGCKLPQPEYPPALIIF). The helical transmembrane segment at 31–51 (MFCAMVITIVVDLIGNSMVIL) threads the bilayer. Residues 52–64 (AVTKNKKLRNSGN) lie on the Cytoplasmic side of the membrane. Residues 65-85 (IFVVSLSVADMLVAIYPYPLM) form a helical membrane-spanning segment. Over 86 to 103 (LHAMSIGGWDLSQLQCQM) the chain is Extracellular. Cys-101 and Cys-178 are joined by a disulfide. The chain crosses the membrane as a helical span at residues 104–124 (VGFITGLSVVGSIFNIVAIAI). Topologically, residues 125–143 (NRYCYICHSLQYERIFSVR) are cytoplasmic. A helical transmembrane segment spans residues 144 to 164 (NTCIYLVITWIMTVLAVLPNM). The Extracellular segment spans residues 165–188 (YIGTIEYDPRTYTCIFNYLNNPVF). The chain crosses the membrane as a helical span at residues 189–209 (TVTIVCIHFVLPLLIVGFCYV). Residues 210 to 239 (RIWTKVLAARDPAGQNPDNQLAEVRNFLTM) lie on the Cytoplasmic side of the membrane. Residues 240–260 (FVIFLLFAVCWCPINVLTVLV) traverse the membrane as a helical segment. The Extracellular portion of the chain corresponds to 261 to 273 (AVSPKEMAGKIPN). Residues 274 to 294 (WLYLAAYFIAYFNSCLNAVIY) traverse the membrane as a helical segment. The Cytoplasmic portion of the chain corresponds to 295–617 (GLLNENFRRE…VEDDPDEMAV (323 aa)). Disordered stretches follow at residues 340–438 (AHAR…ATVY) and 464–596 (SVHF…VTTS). Over residues 341-353 (HARDQAREQDRAH) the composition is skewed to basic and acidic residues. Residues 485 to 500 (GSHSKSAFSAATSHPK) show a composition bias toward polar residues.

It belongs to the G-protein coupled receptor 1 family. Homodimer, and heterodimer with MTNR1A and MTNR1B. Interacts with KAT5. Interacts with RTN4 isoform A/NOGO-A. Interacts with TGFBR1. In terms of assembly, interacts with GTF2I. Cleaved by CAPN1 in a calcium-dependent manner. As to expression, hypothalamus and pituitary.

It localises to the cell membrane. Its subcellular location is the postsynaptic density. It is found in the nucleus. Functionally, g protein-coupled receptor that plays a role in numerous physiological processes including regulation of energy metabolism, neurite outgrowth or cell migration. Promotes self-renewal and neuronal differentiation of neural progenitor cells through activation of the NOTCH and WNT/beta-catenin signaling pathways. Modulates the KAT5-dependent glucocorticoid receptor signaling by modulating KAT5 subcellular compartmentalisation. Also plays a role in the activation TGFBR1 in the absence of TGFBR2 by interfering with FKBP1A binding to TGFBR1, leading to induction of both canonical and non-canonical SMAD signaling pathways resulting in inhibition of proliferation or promotion of migration. Upon cleavage by CAPN1, functions as a scaffold in the nucleus for interacting partners such as GTF2I to promote FOS promoter activation. The sequence is that of Melatonin-related receptor (GPR50) from Homo sapiens (Human).